The chain runs to 520 residues: Nonsense-mediated mRNA decay factor SMG9 (520 aa).

Residues 1–143 (MSESGHSQPG…KGEKEGQRPT (143 aa)) form a disordered region. Serine 2 carries the post-translational modification N-acetylserine. Phosphoserine occurs at positions 2, 4, 7, 32, and 53. Residues 36-53 (GRERDYIAPWERERRDGS) show a composition bias toward basic and acidic residues. Composition is skewed to pro residues over residues 78–94 (QPPPSTAPAAPPAPAPL) and 122–133 (TAPPPPTAPAPP). Serine 451 bears the Phosphoserine mark.

It belongs to the SMG9 family. Self-associates to form homodimers and forms heterodimers with SMG8; these assembly forms may represent SMG1C intermediate forms. Component of the SMG1C complex composed of SMG1, SMG8 and SMG9. Interacts with DHX34; the interaction is RNA-independent. Post-translationally, phosphorylated by SMG1.

Its function is as follows. Involved in nonsense-mediated decay (NMD) of mRNAs containing premature stop codons. Is recruited by release factors to stalled ribosomes together with SMG1 and SMG8 (forming the SMG1C protein kinase complex) and, in the SMG1C complex, is required for the efficient association between SMG1 and SMG8. Plays a role in brain, heart, and eye development. The protein is Nonsense-mediated mRNA decay factor SMG9 of Mus musculus (Mouse).